A 362-amino-acid polypeptide reads, in one-letter code: N5-carboxyaminoimidazole ribonucleotide synthase (362 aa).

Residues arginine 108, lysine 148, 153–159, 185–188, glutamate 193, histidine 216, and 270–271 contribute to the ATP site; these read GYDGKGQ, EGFV, and NE. Residues 112–300 enclose the ATP-grasp domain; it reads KQFLNESGIE…QFEQHIRAVA (189 aa).

Belongs to the PurK/PurT family. As to quaternary structure, homodimer.

The enzyme catalyses 5-amino-1-(5-phospho-beta-D-ribosyl)imidazole + hydrogencarbonate + ATP = 5-carboxyamino-1-(5-phospho-D-ribosyl)imidazole + ADP + phosphate + 2 H(+). It participates in purine metabolism; IMP biosynthesis via de novo pathway; 5-amino-1-(5-phospho-D-ribosyl)imidazole-4-carboxylate from 5-amino-1-(5-phospho-D-ribosyl)imidazole (N5-CAIR route): step 1/2. In terms of biological role, catalyzes the ATP-dependent conversion of 5-aminoimidazole ribonucleotide (AIR) and HCO(3)(-) to N5-carboxyaminoimidazole ribonucleotide (N5-CAIR). The polypeptide is N5-carboxyaminoimidazole ribonucleotide synthase (Brucella melitensis biotype 1 (strain ATCC 23456 / CCUG 17765 / NCTC 10094 / 16M)).